Consider the following 386-residue polypeptide: Acetate kinase (386 aa).

N7 contributes to the Mg(2+) binding site. K14 provides a ligand contact to ATP. R78 contacts substrate. Residue D135 is the Proton donor/acceptor of the active site. ATP is bound by residues 195-199, 268-270, and 316-320; these read HLGNG, DMR, and GIGEN. E370 lines the Mg(2+) pocket.

It belongs to the acetokinase family. As to quaternary structure, homodimer. The cofactor is Mg(2+). Requires Mn(2+) as cofactor.

It localises to the cytoplasm. It catalyses the reaction acetate + ATP = acetyl phosphate + ADP. Its pathway is metabolic intermediate biosynthesis; acetyl-CoA biosynthesis; acetyl-CoA from acetate: step 1/2. Functionally, catalyzes the formation of acetyl phosphate from acetate and ATP. Can also catalyze the reverse reaction. The sequence is that of Acetate kinase from Pseudarthrobacter chlorophenolicus (strain ATCC 700700 / DSM 12829 / CIP 107037 / JCM 12360 / KCTC 9906 / NCIMB 13794 / A6) (Arthrobacter chlorophenolicus).